Reading from the N-terminus, the 794-residue chain is MTDTQAAAERIAQLRTELDTHNYRYYVLDEPSIPDAEYDRLFRELQALEAEYPQLLTPDSPTQRVSGTPASAFGEVRHEIPMLSLGNAFEEQDLLDFDRRVREGLADLLPGGDLLGGGAEVEYSCEPKLDGLAVSLLYERGQLVRGATRGDGSTGEDITSNVRTIRNVPLKLHGEGWPEILEVRGEVFMSKAGFEALNAKAVETGGKTFANPRNAAAGSLRQLDSKITASRPLEFCAYGFGQVSGTLPDTQVGILEAFRGWGIPISRELRLVKGAQACRDYYDDIGRRRDALAYEIDGVVFKVNRIAFQRELGFRAREPRWAIAHKFPAREELTELLGVEFQVGRTGAVTPVARLKPVQVAGVTVSNATLHNMDEVARLGLRIGDTVVIRRAGDVIPQVMQVVLERRPADAQAIEVPEHCPVCGSAVERTQLVKRSKGKESISEGAIYRCVGRLSCQAQLKQAIIHFVSRRAMDIDGLGDKIVEQLVDRGLVASPADLYTLTYEQVFELEGFAELSTNNLLTAIADSRKPSLARFIFALGIPDVGEETAKLLARSLGSLERIGKALPEVLTYLPDVGAEVAYEIHNFFADEHNRQVIAQLRDAEHGVQLQEEGEVAAEFAACASLAGFIDKLNIPFIAATGAEKLASRFGSLDGIIRADWLDLRQVERLPERAAKSLRDFFDEPANVQRALAIEAQLREFGMHWQSERKAVEGLPLAGQTWVLTGTLEAMSRDVAKDKLEGLGAKVAGSVSAKTHCVVAGPGAGSKLAKANELGVKVLDEDGLLKLFDEHGVAR.

NAD(+) is bound by residues 35–39, 84–85, and Glu-126; these read DAEYD and SL. Lys-128 functions as the N6-AMP-lysine intermediate in the catalytic mechanism. Residues Arg-149, Glu-186, Lys-302, and Lys-326 each coordinate NAD(+). Residues Cys-420, Cys-423, Cys-450, and Cys-456 each contribute to the Zn(2+) site. In terms of domain architecture, BRCT spans 711–794; it reads VEGLPLAGQT…KLFDEHGVAR (84 aa).

This sequence belongs to the NAD-dependent DNA ligase family. LigA subfamily. The cofactor is Mg(2+). Requires Mn(2+) as cofactor.

The catalysed reaction is NAD(+) + (deoxyribonucleotide)n-3'-hydroxyl + 5'-phospho-(deoxyribonucleotide)m = (deoxyribonucleotide)n+m + AMP + beta-nicotinamide D-nucleotide.. Its function is as follows. DNA ligase that catalyzes the formation of phosphodiester linkages between 5'-phosphoryl and 3'-hydroxyl groups in double-stranded DNA using NAD as a coenzyme and as the energy source for the reaction. It is essential for DNA replication and repair of damaged DNA. The chain is DNA ligase from Pseudomonas aeruginosa (strain LESB58).